A 433-amino-acid chain; its full sequence is Zinc carboxypeptidase A 1 (433 aa).

A signal peptide spans 1–28 (MVRLNSAAGSRWWAPAMAILAVALSVEA). Residues 130–423 (DYHTLEEIHA…DSLITLLEES (294 aa)) enclose the Peptidase M14 domain. Zn(2+) is bound by residues His187 and Glu190. An intrachain disulfide couples Cys253 to Cys276. Residue His312 participates in Zn(2+) binding. Glu387 serves as the catalytic Proton donor/acceptor.

The protein belongs to the peptidase M14 family. It depends on Zn(2+) as a cofactor. Expressed in the posterior midgut in pupae and female adults.

The protein resides in the secreted. In terms of biological role, involved in the digestion of the blood meal. The sequence is that of Zinc carboxypeptidase A 1 from Anopheles gambiae (African malaria mosquito).